A 365-amino-acid polypeptide reads, in one-letter code: Phenoloxidase-activating factor 1 (365 aa).

Positions 1 to 23 are cleaved as a signal peptide; sequence MKQVHFFILWFFVLNLYSIKAQA. A Clip domain is found at 24-74; that stretch reads GCRTPNGENARCVPINNCKILYDSVLTSDPEVIRFLRASQCGYNGQPLVCC. 8 cysteine pairs are disulfide-bonded: C25–C73, C35–C64, C41–C74, C101–C240, C140–C156, C184–C191, C284–C301, and C311–C340. The Peptidase S1 domain maps to 110 to 364; sequence ILNGDDTVPE…YRDWIEGNIR (255 aa). N-linked (GlcNAc...) asparagine glycosylation occurs at N131. H155 serves as the catalytic Charge relay system. Residues E175, N177, T180, and D183 each coordinate Ca(2+). The Charge relay system role is filled by D220. The Charge relay system role is filled by S315.

Belongs to the peptidase S1 family. CLIP subfamily. In terms of assembly, in the active form, heterodimer of a light chain and a heavy chain; disulfide-linked. Post-translationally, cleaved following the recognition of pathogen-derived products, probably by a lysyl endopeptidase.

It is found in the secreted. With respect to regulation, protein stability and endopeptidase activity are calcium dependent. First cleavage on prophenoloxidase PPO1 and PPO2 is not dependent on calcium; however, cleavage of PPO1 and PPO2 to their active forms is dependent on calcium and on the presence of PPAF2 and PPAF3. Cleavage of PPAF2 is inhibited by calcium. Inhibited by ethylenediaminetetraacetic acid (EDTA), p-nitrophenyl-p'-guanido-benzoate, diisopropylphosphorofluoridate (iPr2PF) and p-(Amidinophenyl)methanesulfonyl fluoride (p-APMSF). Serine endopeptidase which, by cleaving prophenoloxidase PPO1 and PPO2, is required for the activation of the prophenoloxidase cascade probably following the recognition of pathogen-derived products. This Holotrichia diomphalia (Korean black chafer) protein is Phenoloxidase-activating factor 1.